A 370-amino-acid polypeptide reads, in one-letter code: MSSLPRGFEPQTPEDLGQRSLAELREMLKRQERLLRNVKFICKLPDKGKKISDAVTKLKAAIAEREEVRGRSELFYPVSLDCKERQKAIAVVDGDRDKAQNSDQILDTSSPVPGCSSVANITSSQTTSRQQGLAHPTRGGDAEAAEAEHTVSEHPTSSSGAPAPSSSQASEGLPQHCALGQVEDHPGSSDNLFIDRLQRITIADPTEHHSEGNRNPENLAGLWSGPQKKPHYMEVLEMRAKNPMPPPHKFKTNVLPSQPRDSSSACQRRGSPISSEERRRRDRKHLDDITAARLLPLHHLPTQLLSIEESLALQRQQKQSYEEIQAKLAAQKLAERLNIKMQSYNPEGESSRKYREVRDEDDDQSSEDEF.

The interval 1-20 (MSSLPRGFEPQTPEDLGQRS) is disordered. Residues 15-69 (DLGQRSLAELREMLKRQERLLRNVKFICKLPDKGKKISDAVTKLKAAIAEREEVR) adopt a coiled-coil conformation. Positions 29–68 (KRQERLLRNVKFICKLPDKGKKISDAVTKLKAAIAEREEV) are important for transcription repressor activity. Disordered regions lie at residues 93 to 172 (DGDR…ASEG), 204 to 226 (DPTE…WSGP), and 241 to 283 (KNPM…RRDR). Over residues 101 to 131 (NSDQILDTSSPVPGCSSVANITSSQTTSRQQ) the composition is skewed to polar residues. Basic and acidic residues predominate over residues 138 to 152 (RGGDAEAAEAEHTVS). The span at 155–170 (PTSSSGAPAPSSSQAS) shows a compositional bias: low complexity. A compositionally biased stretch (basic and acidic residues) spans 205–214 (PTEHHSEGNR). The interval 228–299 (KKPHYMEVLE…TAARLLPLHH (72 aa)) is interaction with Pol II. Residues 254–266 (VLPSQPRDSSSAC) are compositionally biased toward polar residues. At S271 the chain carries Phosphoserine. Residues 300–315 (LPTQLLSIEESLALQR) form an important for transcription repressor activity region. The stretch at 303–328 (QLLSIEESLALQRQQKQSYEEIQAKL) forms a coiled coil. The interaction with Pol II stretch occupies residues 316 to 341 (QQKQSYEEIQAKLAAQKLAERLNIKM). The disordered stretch occupies residues 340–370 (KMQSYNPEGESSRKYREVRDEDDDQSSEDEF). Positions 349 to 358 (ESSRKYREVR) are enriched in basic and acidic residues. The span at 359 to 370 (DEDDDQSSEDEF) shows a compositional bias: acidic residues.

Belongs to the GRINL1 family. As to quaternary structure, component of the Pol II(G) complex, which contains the RNA polymerase II (Pol II) core complex subunits and POLR2M and appears to be an abundant form of Pol II. In terms of processing, dephosphorylated at Ser-271 by the PNUTS-PP1 complex, promoting RNA polymerase II transcription pause-release.

It is found in the nucleus. In terms of biological role, appears to be a stable component of the Pol II(G) complex form of RNA polymerase II (Pol II). Pol II synthesizes mRNA precursors and many functional non-coding RNAs and is the central component of the basal RNA polymerase II transcription machinery. May play a role in Mediator complex-dependent regulation of transcription activation. Acts in vitro as a negative regulator of transcriptional activation; this repression is relieved by the Mediator complex, which restores Pol II(G) activator-dependent transcription to a level equivalent to that of Pol II. The sequence is that of DNA-directed RNA polymerase II subunit GRINL1A (POLR2M) from Bos taurus (Bovine).